We begin with the raw amino-acid sequence, 184 residues long: NADH-quinone oxidoreductase subunit B (184 aa).

Residues C37, C38, C103, and C132 each contribute to the [4Fe-4S] cluster site. The tract at residues 164-184 is disordered; that stretch reads HEREEAAKHALPTHSMKGLLR.

Belongs to the complex I 20 kDa subunit family. As to quaternary structure, NDH-1 is composed of 14 different subunits. Subunits NuoB, C, D, E, F, and G constitute the peripheral sector of the complex. The cofactor is [4Fe-4S] cluster.

Its subcellular location is the cell membrane. It catalyses the reaction a quinone + NADH + 5 H(+)(in) = a quinol + NAD(+) + 4 H(+)(out). In terms of biological role, NDH-1 shuttles electrons from NADH, via FMN and iron-sulfur (Fe-S) centers, to quinones in the respiratory chain. The immediate electron acceptor for the enzyme in this species is believed to be a menaquinone. Couples the redox reaction to proton translocation (for every two electrons transferred, four hydrogen ions are translocated across the cytoplasmic membrane), and thus conserves the redox energy in a proton gradient. The sequence is that of NADH-quinone oxidoreductase subunit B from Acidothermus cellulolyticus (strain ATCC 43068 / DSM 8971 / 11B).